We begin with the raw amino-acid sequence, 303 residues long: MYYGFDIGGTKIALGVFDSTRRLQWEKRVPTPHASYSAFLDAVCELVAEADQRFGVKGSVGIGIPGMPETEDGTLYAANVPAASGKPLRADLSARLDRDVRLDNDANCFALSEAWDDEFTQYPLVMGLILGTGVGGGLVLNGKPITGQSYITGEFGHMRLPVDALTLMGFDFPLRRCGCGQMGCIENYLSGRGFAWLYQHYYDQSLQAPEIIALWEQGDEQAHAHVERYLDLLAVCLGNILTIVDPDLLVIGGGLSNFTAITTQLAERLPRHLLPVARAPRIERARHGDAGGMRGAAFLHLTD.

Residues 4–11 (GFDIGGTK) and 133–140 (GVGGGLVL) each bind ATP. Residues H157, C177, C179, and C184 each contribute to the Zn(2+) site.

The protein belongs to the ROK (NagC/XylR) family. NagK subfamily.

The enzyme catalyses N-acetyl-D-glucosamine + ATP = N-acetyl-D-glucosamine 6-phosphate + ADP + H(+). The protein operates within cell wall biogenesis; peptidoglycan recycling. Catalyzes the phosphorylation of N-acetyl-D-glucosamine (GlcNAc) derived from cell-wall degradation, yielding GlcNAc-6-P. This chain is N-acetyl-D-glucosamine kinase, found in Salmonella heidelberg (strain SL476).